We begin with the raw amino-acid sequence, 139 residues long: Galactoside-binding soluble lectin 13 (139 aa).

Positions 6-138 (VPYKLPVSLS…DISLTSVCVC (133 aa)) constitute a Galectin domain.

Homodimer; disulfide-linked. Detected in adult and fetal spleen, fetal kidney, adult urinary bladder and placenta. Placental expression originates predominantly from the syncytiotrophoblast.

It is found in the cytoplasm. The protein resides in the nucleus matrix. Its function is as follows. Binds beta-galactoside and lactose. Strong inducer of T-cell apoptosis. Has hemagglutinating activity towards chicken erythrocytes. The polypeptide is Galactoside-binding soluble lectin 13 (LGALS13) (Homo sapiens (Human)).